A 333-amino-acid polypeptide reads, in one-letter code: Glycerol-3-phosphate dehydrogenase [NAD(P)+] (333 aa).

NADPH contacts are provided by Trp11, Arg30, and Lys105. The sn-glycerol 3-phosphate site is built by Lys105, Gly133, and Ser135. Position 137 (Ala137) interacts with NADPH. Residues Lys188, Asp241, Ser251, Arg252, and Asn253 each coordinate sn-glycerol 3-phosphate. Catalysis depends on Lys188, which acts as the Proton acceptor. Arg252 is an NADPH binding site. The NADPH site is built by Val276 and Glu278.

This sequence belongs to the NAD-dependent glycerol-3-phosphate dehydrogenase family.

The protein resides in the cytoplasm. It catalyses the reaction sn-glycerol 3-phosphate + NAD(+) = dihydroxyacetone phosphate + NADH + H(+). The catalysed reaction is sn-glycerol 3-phosphate + NADP(+) = dihydroxyacetone phosphate + NADPH + H(+). It participates in membrane lipid metabolism; glycerophospholipid metabolism. Catalyzes the reduction of the glycolytic intermediate dihydroxyacetone phosphate (DHAP) to sn-glycerol 3-phosphate (G3P), the key precursor for phospholipid synthesis. This Methylibium petroleiphilum (strain ATCC BAA-1232 / LMG 22953 / PM1) protein is Glycerol-3-phosphate dehydrogenase [NAD(P)+].